The chain runs to 469 residues: Alpha-galactosidase (469 aa).

A signal peptide spans 1-17; the sequence is MFPFFFALFFSSTDVLA. An intrachain disulfide couples C41 to C73. The substrate site is built by D71 and D72. An N-linked (GlcNAc...) asparagine glycan is attached at N81. C120 and C150 are oxidised to a cystine. Residue K146 coordinates substrate. D148 serves as the catalytic Nucleophile. N174 is a glycosylation site (N-linked (GlcNAc...) asparagine). R204 lines the substrate pocket. The active-site Proton donor is D208. 2 disulfides stabilise this stretch: C220-C236 and C222-C229. Residue Q250 coordinates substrate. N269, N369, N402, N412, N421, N426, and N434 each carry an N-linked (GlcNAc...) asparagine glycan.

It belongs to the glycosyl hydrolase 27 family. In terms of assembly, homotetramer.

It is found in the secreted. It carries out the reaction Hydrolysis of terminal, non-reducing alpha-D-galactose residues in alpha-D-galactosides, including galactose oligosaccharides, galactomannans and galactolipids.. The sequence is that of Alpha-galactosidase (MEL) from Lachancea cidri (Yeast).